The chain runs to 414 residues: Aspartic protease-like protein pynH (414 aa).

The first 19 residues, 1–19 (MFPCSRIWSLLVAAATASA), serve as a signal peptide directing secretion. One can recognise a Peptidase A1 domain in the interval 43 to 410 (FLTDIALGTP…DFEKLQVGIA (368 aa)). N-linked (GlcNAc...) asparagine glycosylation is found at N93, N102, N140, N151, N173, N202, N221, N258, N272, N335, and N366. Cysteines 333 and 371 form a disulfide.

Belongs to the peptidase A1 family.

Its pathway is secondary metabolite biosynthesis. Functionally, aspartic protease-like protein; part of the gene cluster that mediates the biosynthesis of pyranonigrins, a family of antioxidative compounds. The first step of pyranonigrins biosynthesis is performed by the hybrid PKS-NRPS synthetase that condenses 6 malonyl-CoA units to an acetyl starter unit, to form a 1,3,5-trioxotetradecane-6,8-dienyl-ACP. The enoyl reductase (ER) domain of pynA is likely to be functional during the first two rounds of polyketide chain extension, to generate the saturated C-C bonds of the alkyl side chain. PynA subsequently forms the amide bond between the acyl chain and L-serine. Although pynA has a terminal reductase domain, it appears to require the thioesterase pynI for the release of the straight-chain intermediate from pynA via the formation of a tetramic acid pyranonigrin J. The methyltransferase pynC then coverts pyranonigrin J to pyranonigrin I via N-methylation. The FAD-dependent monooxygenase pynG catalyzes an epoxidation-mediated cyclization to form the dihydro-gamma-pyrone moiety, followed by pynD-catalyzed oxidation of the alcohol to the ketone and enolization to yield the characteristic tetramic acid-fused gamma-pyrone core of pyranonigrin H. Pyranonigrin H is substrate of pynH for dehydration-mediated exo-methylene formation from the serine side chain to produce pyranonigrin E, before the oxidase pynE reduces the exo-methylene of pyranonigrin E into a pendant methyl to form pyranonigrin G. The FAD-linked oxidoreductase pynB performs the reverse reaction and converts pyranonigrin G back to pyranonigrin E. The sequence is that of Aspartic protease-like protein pynH from Aspergillus niger (strain ATCC MYA-4892 / CBS 513.88 / FGSC A1513).